Here is a 341-residue protein sequence, read N- to C-terminus: MDHAADATRTDLMTITRFVLNEQSKRPESRGDFTILMSHIVLGCKFVCSAVNKAGLAKLIGLAGETNIQGEEQKKLDVLSNEVFIKALISSGRTCILVSEEDEEATFVEPSLRGKYCVVFDPLDGCSNIDCGVSIGTIFGIYMVKDLNNATLDDVLQPGKNMVAAGYCMYGSSCTLVMSTGSGVNGFTHDPSLGEFILTHPDIKIPKKGKIYSVNEGNAKNWDGPTTKYVEKCKFPKDGSSPKSLRYIGSMVADVHRTLLYGGIFMYPGDKKSPNGKLRVLYEVFPMSFLMEQAGGQAFTGEQRALDLVPKNIHDRSPVFLGSYDDVEDIKALYAAEQKNA.

Mg(2+)-binding residues include Glu71, Glu100, Asp121, Leu123, and Asp124. Residues 124–127 (DGCS), Asn215, Tyr247, Tyr267, and Lys277 each bind substrate. Glu283 provides a ligand contact to Mg(2+).

It belongs to the FBPase class 1 family. It depends on Mg(2+) as a cofactor.

The protein resides in the cytoplasm. It carries out the reaction beta-D-fructose 1,6-bisphosphate + H2O = beta-D-fructose 6-phosphate + phosphate. This Beta vulgaris (Sugar beet) protein is Fructose-1,6-bisphosphatase, cytosolic.